The sequence spans 284 residues: Methylglyoxal reductase YeaE (284 aa).

It belongs to the aldo/keto reductase family.

It catalyses the reaction hydroxyacetone + NADP(+) = methylglyoxal + NADPH + H(+). It carries out the reaction a primary alcohol + NADP(+) = an aldehyde + NADPH + H(+). Aldo-keto reductase that contributes to cellular methylglyoxal detoxification by catalyzing the NADPH-dependent conversion of methylglyoxal to acetol. It also exhibits activity with glyoxal and probably plays a significant role in detoxification of glyoxal in vivo. Can also use aromatic aldehydes such as 4-nitrobenzaldehyde, 3-nitrobenzaldehyde and benzaldehyde, and phenylglyoxal. The polypeptide is Methylglyoxal reductase YeaE (yeaE) (Escherichia coli (strain K12)).